A 175-amino-acid chain; its full sequence is Putative metal-dependent hydrolase BPUM_0784 (175 aa).

Positions 65, 157, and 161 each coordinate Zn(2+).

This sequence belongs to the metal hydrolase YfiT family. As to quaternary structure, homodimer. Zn(2+) serves as cofactor.

The protein resides in the cytoplasm. In terms of biological role, possible metal-dependent hydrolase. The polypeptide is Putative metal-dependent hydrolase BPUM_0784 (Bacillus pumilus (strain SAFR-032)).